The following is a 596-amino-acid chain: CRISPR-associated DNA-binding protein Cas12m (596 aa).

Residues 19-53 are recognition domain (REC1-N); the sequence is EVLRQQLWLAHNLREDLVSLQLAYDDDLKAIWSSY. The tract at residues 54 to 121 is recognition domain (REC2); sequence PDVAQAEDTM…RDAIAVVKDD (68 aa). Coiled-coil stretches lie at residues 55–83 and 91–117; these read DVAQ…ARIE and TELT…AIAV. Residues 122-190 form a recognition domain (REC1-C) region; the sequence is AAERRKARSD…LRHHRFDGSG (69 aa). Residues 191–302 form a wedge domain (WED) region; the sequence is TIAVQLQRQA…RAKLCVTARI (112 aa). Positions 303–313 are linker; sequence GDTEPVTSGPT. Residues 314–541 form a ruvC-I region; the sequence is VALHLGWRST…RDGVPVTIVA (228 aa). H317 contacts Mg(2+). A target nucleic-acid binding (TNB) region spans residues 541–577; it reads AAADFTRTHSRCGHVNPADDRYLSNPVRCDGCGAMYD. Positions 549, 552, 569, and 572 each coordinate Zn(2+). Positions 578 to 596 are ruvC-II; it reads QDRSFVTLMLRAATAPSNP. D579 is a binding site for Mg(2+).

The protein belongs to the CRISPR-associated DNA-binding protein Cas12m family. Binds crRNA and target dsDNA as a monomer. It depends on Mg(2+) as a cofactor. The cofactor is Zn(2+).

CRISPR (clustered regularly interspaced short palindromic repeat), is an adaptive immune system that provides protection against mobile genetic elements (viruses, transposable elements and conjugative plasmids). CRISPR clusters contain sequences complementary to antecedent mobile elements and target invading nucleic acids. CRISPR clusters are transcribed and processed into CRISPR RNA (crRNA). Recognizes a short motif in the CRISPR repeat sequences (the 5' PAM or protospacer adjacent motif, 5'-TTN-3' in this organism) to help distinguish self versus nonself, as targets within the bacterial CRISPR locus do not have PAMs. Upon expression in E.coli as a CRISPR locus inhibits plasmid propagation when targeted to regions essential for plasmid propagation (replication origin and dnaA). The crRNA-Cas12m complex inhibits transcription from target DNA leading to gene silencing. Cas12m-crRNA binds DNA in a PAM-dependent, crRNA-guided fashion. Binds a 17-bp crRNA-ss-target DNA heteroduplex, in a 56 nucleotide crRNA. No dsDNA, ssDNA or RNA nuclease activity is seen for the crRNA-Cas12m complex. Is required to process pre-crRNA to mature crRNA without a tracrRNA. Upon expression in E.coli as a CRISPR region preferentially binds to its associated crRNA. The sequence is that of CRISPR-associated DNA-binding protein Cas12m from Mycolicibacterium mucogenicum (Mycobacterium mucogenicum).